Reading from the N-terminus, the 143-residue chain is Large ribosomal subunit protein uL16 (143 aa).

The protein belongs to the universal ribosomal protein uL16 family. Part of the 50S ribosomal subunit.

Its function is as follows. Binds 23S rRNA and is also seen to make contacts with the A and possibly P site tRNAs. This Caulobacter vibrioides (strain ATCC 19089 / CIP 103742 / CB 15) (Caulobacter crescentus) protein is Large ribosomal subunit protein uL16.